The following is a 286-amino-acid chain: Bifunctional protein FolD (286 aa).

Residues 160–162 (GRS), Ser-189, and Thr-230 each bind NADP(+).

The protein belongs to the tetrahydrofolate dehydrogenase/cyclohydrolase family. As to quaternary structure, homodimer.

The enzyme catalyses (6R)-5,10-methylene-5,6,7,8-tetrahydrofolate + NADP(+) = (6R)-5,10-methenyltetrahydrofolate + NADPH. The catalysed reaction is (6R)-5,10-methenyltetrahydrofolate + H2O = (6R)-10-formyltetrahydrofolate + H(+). The protein operates within one-carbon metabolism; tetrahydrofolate interconversion. Its function is as follows. Catalyzes the oxidation of 5,10-methylenetetrahydrofolate to 5,10-methenyltetrahydrofolate and then the hydrolysis of 5,10-methenyltetrahydrofolate to 10-formyltetrahydrofolate. The polypeptide is Bifunctional protein FolD (Chlamydia pneumoniae (Chlamydophila pneumoniae)).